The following is an 846-amino-acid chain: Choline trimethylamine-lyase (846 aa).

The region spanning 60–718 is the PFL domain; that stretch reads PRHVKLKENF…LLGASANGRR (659 aa). C489 (cysteine radical intermediate) is an active-site residue. E491 functions as the Proton acceptor in the catalytic mechanism. The region spanning 725-846 is the Glycine radical domain; the sequence is DGISPTQGAD…IISRTMLHGF (122 aa). Residue G821 is modified to Glycine radical.

It belongs to the glycyl radical enzyme (GRE) family. CutC subfamily. Homodimer. Post-translationally, requires the activating protein CutD to generate the key active site glycyl radical on Gly-821 that is involved in catalysis.

It catalyses the reaction choline = trimethylamine + acetaldehyde. It functions in the pathway amine and polyamine metabolism; choline degradation. Its function is as follows. Glycine radical enzyme that catalyzes the cleavage of a C-N bond in choline, producing trimethylamine (TMA) and acetaldehyde. Is involved in the anaerobic choline utilization pathway that allows D.alaskensis to grow on choline as a source of carbon and energy. Is strictly specific for choline as substrate. The chain is Choline trimethylamine-lyase from Oleidesulfovibrio alaskensis (strain ATCC BAA-1058 / DSM 17464 / G20) (Desulfovibrio alaskensis).